Consider the following 1073-residue polypeptide: Carbamoyl phosphate synthase large chain (1073 aa).

The interval 1–403 is carboxyphosphate synthetic domain; sequence MPKRTDIKSI…SLQKALRGLE (403 aa). Arg-129, Arg-169, Gly-175, Gly-176, Glu-208, Leu-210, Glu-215, Gly-241, Val-242, His-243, Gln-285, and Glu-299 together coordinate ATP. An ATP-grasp 1 domain is found at 133–328; that stretch reads DKAMKDIGLE…IAKIAAKLAI (196 aa). 3 residues coordinate Mg(2+): Gln-285, Glu-299, and Asn-301. Residues Gln-285, Glu-299, and Asn-301 each coordinate Mn(2+). Residues 404-553 are oligomerization domain; that stretch reads VGACGLDPKV…YSTYEEECEA (150 aa). The carbamoyl phosphate synthetic domain stretch occupies residues 554 to 935; sequence NPSTRDKIMI…AFAKAQMGAS (382 aa). The ATP-grasp 2 domain occupies 678 to 869; that stretch reads QQMVQRLSLL…LAMIAARVMA (192 aa). Residues Arg-714, His-753, Leu-755, Glu-760, Gly-785, Val-786, His-787, Ser-788, Gln-828, and Glu-840 each coordinate ATP. Gln-828, Glu-840, and Asn-842 together coordinate Mg(2+). Mn(2+) is bound by residues Gln-828, Glu-840, and Asn-842. In terms of domain architecture, MGS-like spans 936 to 1073; that stretch reads EVLPTGGTAF…LQDLHAGLKA (138 aa). Residues 936–1073 form an allosteric domain region; the sequence is EVLPTGGTAF…LQDLHAGLKA (138 aa).

Belongs to the CarB family. Composed of two chains; the small (or glutamine) chain promotes the hydrolysis of glutamine to ammonia, which is used by the large (or ammonia) chain to synthesize carbamoyl phosphate. Tetramer of heterodimers (alpha,beta)4. It depends on Mg(2+) as a cofactor. Mn(2+) is required as a cofactor.

The catalysed reaction is hydrogencarbonate + L-glutamine + 2 ATP + H2O = carbamoyl phosphate + L-glutamate + 2 ADP + phosphate + 2 H(+). It carries out the reaction hydrogencarbonate + NH4(+) + 2 ATP = carbamoyl phosphate + 2 ADP + phosphate + 2 H(+). It participates in amino-acid biosynthesis; L-arginine biosynthesis; carbamoyl phosphate from bicarbonate: step 1/1. The protein operates within pyrimidine metabolism; UMP biosynthesis via de novo pathway; (S)-dihydroorotate from bicarbonate: step 1/3. Its function is as follows. Large subunit of the glutamine-dependent carbamoyl phosphate synthetase (CPSase). CPSase catalyzes the formation of carbamoyl phosphate from the ammonia moiety of glutamine, carbonate, and phosphate donated by ATP, constituting the first step of 2 biosynthetic pathways, one leading to arginine and/or urea and the other to pyrimidine nucleotides. The large subunit (synthetase) binds the substrates ammonia (free or transferred from glutamine from the small subunit), hydrogencarbonate and ATP and carries out an ATP-coupled ligase reaction, activating hydrogencarbonate by forming carboxy phosphate which reacts with ammonia to form carbamoyl phosphate. The polypeptide is Carbamoyl phosphate synthase large chain (Pseudomonas putida (strain ATCC 47054 / DSM 6125 / CFBP 8728 / NCIMB 11950 / KT2440)).